A 340-amino-acid polypeptide reads, in one-letter code: Fructoselysine 6-phosphate deglycase (340 aa).

2 consecutive SIS domains span residues 35-169 and 201-331; these read IVEE…RLAP and LGEL…PDER.

Homododecamer.

The enzyme catalyses N(6)-(6-phospho-D-fructosyl)-L-lysine + H2O = D-glucose 6-phosphate + L-lysine. The protein operates within carbohydrate metabolism; fructoselysine degradation; D-glucose 6-phosphate and lysine from fructoselysine: step 2/2. Catalyzes the reversible conversion of fructoselysine 6-phosphate to glucose 6-phosphate and lysine. Functions in a fructoselysine degradation pathway that allows E.coli to grow on fructoselysine or psicoselysine. This chain is Fructoselysine 6-phosphate deglycase (frlB), found in Escherichia coli O157:H7.